Here is a 561-residue protein sequence, read N- to C-terminus: Putative transport protein YbjL (561 aa).

The next 5 membrane-spanning stretches (helical) occupy residues Leu8–Gly28, Leu32–Gln52, Phe66–Phe86, Met94–Phe114, and Asn158–Ala178. RCK C-terminal domains are found at residues Arg200–Asn288 and Val292–Phe373. 5 helical membrane passes run Leu383 to Phe403, Phe406 to Leu426, Phe447 to Gly467, Met475 to Ala495, and Ala540 to Leu560.

This sequence belongs to the AAE transporter (TC 2.A.81) family. YbjL subfamily.

It is found in the cell membrane. The polypeptide is Putative transport protein YbjL (Salmonella dublin (strain CT_02021853)).